We begin with the raw amino-acid sequence, 628 residues long: Protein SDS23 (628 aa).

The interval 1-126 (MVNPPQPRQM…NKSSSQSIAP (126 aa)) is disordered. The segment covering 15–24 (RLSTSTSSGP) has biased composition (polar residues). Composition is skewed to low complexity over residues 40-71 (QLQH…PGST) and 109-123 (SRHA…SSQS). CBS domains lie at 258-319 (LHPK…RFPS) and 334-392 (GSSN…SHLL). The tract at residues 551 to 609 (GRRTDPQAARNQRRRSSTSTTRSSIDSALSAEGILPSGSAIIGSSNAANTGRRGSVEVS) is disordered. Positions 587–599 (SGSAIIGSSNAAN) are enriched in low complexity.

It belongs to the SDS23 family.

It localises to the cytoplasm. It is found in the nucleus. Functionally, involved in DNA replication and cell separation. The chain is Protein SDS23 (SDS24) from Candida albicans (strain SC5314 / ATCC MYA-2876) (Yeast).